A 505-amino-acid polypeptide reads, in one-letter code: N-succinylglutamate 5-semialdehyde dehydrogenase (505 aa).

234–239 is an NAD(+) binding site; sequence GSAHTG. Catalysis depends on residues E257 and C291.

It belongs to the aldehyde dehydrogenase family. AstD subfamily.

It catalyses the reaction N-succinyl-L-glutamate 5-semialdehyde + NAD(+) + H2O = N-succinyl-L-glutamate + NADH + 2 H(+). Its pathway is amino-acid degradation; L-arginine degradation via AST pathway; L-glutamate and succinate from L-arginine: step 4/5. Its function is as follows. Catalyzes the NAD-dependent reduction of succinylglutamate semialdehyde into succinylglutamate. The protein is N-succinylglutamate 5-semialdehyde dehydrogenase of Yersinia pestis (strain Pestoides F).